Here is a 476-residue protein sequence, read N- to C-terminus: Flavin-dependent halogenase otaD (476 aa).

FAD is bound by residues G14 and G17. Chloride contacts are provided by S304 and G305. FAD is bound at residue V306.

It belongs to the flavin-dependent halogenase family.

It carries out the reaction ochratoxin B + FADH2 + chloride + O2 = ochratoxin A + FAD + 2 H2O. Its pathway is mycotoxin biosynthesis. Flavin-dependent halogenase; part of the gene cluster that mediates the biosynthesis of ochratoxin A (OTA), a mycotoxin composed of a chlorinated type I polyketide dihydroisocoumarin moiety linked to L-phenylalanine, and demonstrated to have nephrotoxic, immunotoxic, genotoxic, neurotoxic, and teratogenic properties. OtaD chlorinates ochratoxin B (OTB) at the C-5 position to form OTA. The pathway begins with the highly reducing polyketide synthase otaA that catalyzes the formation of the isocoumarin group during the initial stages of biosynthesis, starting from one acetate and 4 malonate units, to originate the characteristic pentaketide skeleton 7-methylmellein (7-MM) of the OTA molecule. The newly identified cyclase otaY might be involved in the polyketide cyclization reaction during the initial steps of the OTA biosynthesis. 7-MM is then oxidized into 7-carboxymellein (also called ochratoxin beta) by the cytochrome P450 monooxygenase otaC. The NRPS encoded by the otaB gene is involved in the linking of phenylalanine to the dihydroisocoumarin ring. The reaction catalyzed by NRPS results in the production of ochratoxin B (OTB), which is the non-chlorinated analog of OTA and which subsequently serves as the substrate of the halogenase otaD for chlorination activity to form the final molecular structure of OTA, containing a chlorine atom in the C-5 position of the molecule. This Aspergillus niger (strain ATCC MYA-4892 / CBS 513.88 / FGSC A1513) protein is Flavin-dependent halogenase otaD.